A 158-amino-acid polypeptide reads, in one-letter code: Putative metalloproteinase inhibitor tag-225 (158 aa).

The signal sequence occupies residues 1–20; the sequence is MQNLSLSLVILSVLIAVTLA. Residue Cys21 coordinates Zn(2+). The interval 21–25 is involved in metalloproteinase-binding; that stretch reads CKCRE. Cystine bridges form between Cys21-Cys96, Cys23-Cys123, and Cys33-Cys158. The NTR domain occupies 21 to 158; the sequence is CKCREQSTKE…LQSQVKSIKC (138 aa). Residue Asn79 is glycosylated (N-linked (GlcNAc...) asparagine). The involved in metalloproteinase-binding stretch occupies residues 93-94; the sequence is AP.

The protein belongs to the protease inhibitor I35 (TIMP) family.

Its subcellular location is the secreted. In terms of biological role, complexes with metalloproteinases and irreversibly inactivates them by binding to their catalytic zinc cofactor. This is Putative metalloproteinase inhibitor tag-225 (tag-225) from Caenorhabditis elegans.